We begin with the raw amino-acid sequence, 193 residues long: MEVNLLQYEKKYHNYIVAGVDEAGRGSLVGPVVASAVIIDKADIIPGIKDSKKLSKNKREILYERITSNYVWSTAIIAHTEIDNINILEATKKACAIAVANLSLKPQKILVDGNMKFSDIRFISIINGDNLSLSIAAASIIAKVTRDRLMLELSAEFPQYLWHKNYGYGTREHIEAIKTHGLSSYHRRSFKSC.

An RNase H type-2 domain is found at Tyr15–Cys193. A divalent metal cation is bound by residues Asp21, Glu22, and Asp112.

This sequence belongs to the RNase HII family. It depends on Mn(2+) as a cofactor. Requires Mg(2+) as cofactor.

The protein localises to the cytoplasm. The enzyme catalyses Endonucleolytic cleavage to 5'-phosphomonoester.. Endonuclease that specifically degrades the RNA of RNA-DNA hybrids. This is Ribonuclease HII (rnhB) from Rickettsia prowazekii (strain Madrid E).